Here is a 1325-residue protein sequence, read N- to C-terminus: Nonribosomal peptide synthetase (1325 aa).

Residues 248-644 form an adenylation region; the sequence is YQQLDRLSTR…LGEIEYQIQQ (397 aa). The region spanning 779-856 is the Carrier domain; sequence EIVNPGEITL…DQARLLRPLS (78 aa). Serine 816 carries the O-(pantetheine 4'-phosphoryl)serine modification. The condensation stretch occupies residues 893–1310; that stretch reads EDVYPCTPLQ…DDYSTTLHTL (418 aa).

This sequence belongs to the NRP synthetase family. It depends on pantetheine 4'-phosphate as a cofactor.

The protein operates within antifungal biosynthesis. Its function is as follows. Nonribosomal peptide synthetase; part of the gene cluster that mediates the biosynthesis of the tetrahydropyranyl antifungal agent lanomycin that acts as an inhibitor of CYP51 and blocks the ergosterol biosynthesis. The biosynthesis probably begins with the formation of an hexaketide, followed by methionine mediated alkylation of C-2 and C-6, and methylation of the reduced C-3 oxygen, pyran forming reductive ring closure, oxygenation of C-4, beta-keto reduction, enoyl reduction and dehydration of the remaining oxygens, and finally, acylation with glycine to complete the biosynthesis. This is Nonribosomal peptide synthetase from Pyrenophora dematioidea (Helminthosporium dematioideum).